Consider the following 228-residue polypeptide: PKHD-type hydroxylase XC_1340 (228 aa).

The Fe2OG dioxygenase domain occupies 78–180 (RIYPPLFNRY…RVASFFWIQS (103 aa)). Residues His96, Asp98, and His161 each coordinate Fe cation. Arg171 is a 2-oxoglutarate binding site.

Fe(2+) serves as cofactor. Requires L-ascorbate as cofactor.

The protein is PKHD-type hydroxylase XC_1340 of Xanthomonas campestris pv. campestris (strain 8004).